A 436-amino-acid chain; its full sequence is Drebrin-like protein (436 aa).

An ADF-H domain is found at 2-133 (AVNLSRNGPA…EPECIMEKVA (132 aa)). A Phosphothreonine modification is found at Thr26. Ser160 bears the Phosphoserine mark. At Lys176 the chain carries N6-acetyllysine. Residues 178 to 232 (NFWAKAEKEEENRRLEEKRRAEEEKQRLEEERRERELQEAARREQRYQEQHRSAG) are a coiled coil. Composition is skewed to basic and acidic residues over residues 185–229 (KEEE…EQHR) and 264–275 (HPREIFKQKERA). Positions 185–371 (KEEENRRLEE…GSGHIDNYMQ (187 aa)) are disordered. Residues 276–286 (MSTTSVSSSQP) show a composition bias toward polar residues. Ser277, Ser280, Ser283, and Ser291 each carry phosphoserine. At Lys296 the chain carries N6-acetyllysine. Thr299 carries the phosphothreonine modification. The residue at position 311 (Ser311) is a Phosphoserine. Phosphotyrosine occurs at positions 340 and 350. In terms of domain architecture, SH3 spans 377-436 (GQGLCARALYDYQAADDTEISFDPENLITGIEVIDEGWWRGYGPDGHFGMFPANYVELIE).

The protein belongs to the ABP1 family. Interacts with FGD1, MAP4K1 and PRAM1. Interacts with ANKRD54. Interacts with WASL and WIPF1. Interacts with SHANK2 and SHANK3. Interacts with both COBL and PACSIN1. Interacts with DNM1 and SYN1. In terms of tissue distribution, detected in brain (at protein level). Widely expressed in brain with highest levels in hippocampus and cerebral cortex. Located primarily in dendrites and, in moderate amounts, in cell bodies. Isoform 1 and isoform 3 are the predominant isoforms in brain.

The protein localises to the cytoplasm. Its subcellular location is the cytoskeleton. It is found in the cell projection. The protein resides in the lamellipodium. It localises to the ruffle. The protein localises to the cell cortex. Its subcellular location is the cytosol. It is found in the cell membrane. The protein resides in the synapse. It localises to the perikaryon. The protein localises to the neuron projection. Its subcellular location is the dendrite. It is found in the postsynaptic density. The protein resides in the golgi apparatus membrane. It localises to the cytoplasmic vesicle. The protein localises to the clathrin-coated vesicle membrane. Its subcellular location is the podosome. It is found in the early endosome. Adapter protein that binds F-actin and DNM1, and thereby plays a role in receptor-mediated endocytosis. Required for the formation of organized podosome rosettes. May act as a common effector of antigen receptor-signaling pathways in leukocytes. Acts as a key component of the immunological synapse that regulates T-cell activation by bridging TCRs and the actin cytoskeleton to gene activation and endocytic processes. Plays a role in the reorganization of the actin cytoskeleton, formation of cell projections, such as neurites, in neuron morphogenesis and synapse formation via its interaction with WASL and COBL. Does not bind G-actin and promote actin polymerization by itself. The polypeptide is Drebrin-like protein (Rattus norvegicus (Rat)).